Here is a 362-residue protein sequence, read N- to C-terminus: Peptide chain release factor 1 (362 aa).

Position 236 is an N5-methylglutamine (glutamine 236).

It belongs to the prokaryotic/mitochondrial release factor family. Post-translationally, methylated by PrmC. Methylation increases the termination efficiency of RF1.

The protein resides in the cytoplasm. In terms of biological role, peptide chain release factor 1 directs the termination of translation in response to the peptide chain termination codons UAG and UAA. This is Peptide chain release factor 1 from Lactobacillus helveticus (strain DPC 4571).